Here is a 289-residue protein sequence, read N- to C-terminus: Acetyl-coenzyme A carboxylase carboxyl transferase subunit beta (289 aa).

One can recognise a CoA carboxyltransferase N-terminal domain in the interval 28–289 (VMTKCPKCKK…QGGEMAVWQS (262 aa)). 4 residues coordinate Zn(2+): C32, C35, C51, and C54. The segment at 32-54 (CPKCKKIMYTKEVLKNLKVCVNC) adopts a C4-type zinc-finger fold.

The protein belongs to the AccD/PCCB family. As to quaternary structure, acetyl-CoA carboxylase is a heterohexamer composed of biotin carboxyl carrier protein (AccB), biotin carboxylase (AccC) and two subunits each of ACCase subunit alpha (AccA) and ACCase subunit beta (AccD). It depends on Zn(2+) as a cofactor.

The protein localises to the cytoplasm. The enzyme catalyses N(6)-carboxybiotinyl-L-lysyl-[protein] + acetyl-CoA = N(6)-biotinyl-L-lysyl-[protein] + malonyl-CoA. Its pathway is lipid metabolism; malonyl-CoA biosynthesis; malonyl-CoA from acetyl-CoA: step 1/1. In terms of biological role, component of the acetyl coenzyme A carboxylase (ACC) complex. Biotin carboxylase (BC) catalyzes the carboxylation of biotin on its carrier protein (BCCP) and then the CO(2) group is transferred by the transcarboxylase to acetyl-CoA to form malonyl-CoA. The polypeptide is Acetyl-coenzyme A carboxylase carboxyl transferase subunit beta (Bacillus thuringiensis subsp. konkukian (strain 97-27)).